An 804-amino-acid chain; its full sequence is Phenylalanine--tRNA ligase beta subunit (804 aa).

Residues 39 to 147 (GPSFSNVVVA…PNLPLGEDLA (109 aa)) form the tRNA-binding domain. The B5 domain maps to 402–480 (ETVGEIHLRC…RIHGYDNIPV (79 aa)). Residues Asp-458, Asp-464, Glu-467, and Glu-468 each coordinate Mg(2+). One can recognise an FDX-ACB domain in the interval 711–804 (SRYPESSRDV…IIDQTGARVR (94 aa)).

This sequence belongs to the phenylalanyl-tRNA synthetase beta subunit family. Type 1 subfamily. As to quaternary structure, tetramer of two alpha and two beta subunits. Requires Mg(2+) as cofactor.

It is found in the cytoplasm. It carries out the reaction tRNA(Phe) + L-phenylalanine + ATP = L-phenylalanyl-tRNA(Phe) + AMP + diphosphate + H(+). This is Phenylalanine--tRNA ligase beta subunit from Syntrophus aciditrophicus (strain SB).